A 212-amino-acid chain; its full sequence is Nuclear transcription factor Y subunit C-7 (212 aa).

Over residues 1–10 (MEENNGNNNH) the composition is skewed to polar residues. Disordered regions lie at residues 1 to 23 (MEENNGNNNHYLPQPSSSQLPPP) and 190 to 212 (EWPAVPGDGEEAAGEIGGSSGGN).

This sequence belongs to the NFYC/HAP5 subunit family. Heterotrimeric transcription factor composed of three components, NF-YA, NF-YB and NF-YC. NF-YB and NF-YC must interact and dimerize for NF-YA association and DNA binding. Expressed in flowers.

It is found in the nucleus. Stimulates the transcription of various genes by recognizing and binding to a CCAAT motif in promoters. This Arabidopsis thaliana (Mouse-ear cress) protein is Nuclear transcription factor Y subunit C-7 (NFYC7).